We begin with the raw amino-acid sequence, 211 residues long: Late expression factor 7 (211 aa).

Involved in late/very late gene activation. The sequence is that of Late expression factor 7 (LEF-7) from Orgyia pseudotsugata multicapsid polyhedrosis virus (OpMNPV).